Here is a 573-residue protein sequence, read N- to C-terminus: Cytosolic 5'-nucleotidase 1B (573 aa).

Positions 1-11 (MSQTSLKHKKK) are enriched in basic residues. Disordered regions lie at residues 1 to 200 (MSQT…PPTE) and 218 to 238 (EPEY…EEDE). Positions 12 to 35 (NEPGMRYSKESLDAEKRKDSDKTG) are enriched in basic and acidic residues. The span at 60 to 73 (NQWSRTSRSPSTGA) shows a compositional bias: polar residues. Low complexity predominate over residues 93–105 (SSTTSRTSSASPS). A compositionally biased stretch (polar residues) spans 115–136 (TSEKSSIQQTPQNRPITQLESQ). Basic and acidic residues-rich tracts occupy residues 161-174 (WAHR…DLQL) and 182-194 (DSRE…REYP). Asp-428 acts as the Nucleophile in catalysis.

Belongs to the 5'-nucleotidase type 3 family. Requires Mg(2+) as cofactor. In terms of tissue distribution, expressed at highest levels in testis. Also expressed in brain, skeletal muscle, kidney and heart.

The protein resides in the cytoplasm. The catalysed reaction is a ribonucleoside 5'-phosphate + H2O = a ribonucleoside + phosphate. The enzyme catalyses AMP + H2O = adenosine + phosphate. With respect to regulation, activated by ADP. Functionally, catalyzes the hydrolysis of nucleotide monophosphates, releasing inorganic phosphate and the corresponding nucleoside, AMP is the major substrate. The polypeptide is Cytosolic 5'-nucleotidase 1B (Nt5c1b) (Mus musculus (Mouse)).